We begin with the raw amino-acid sequence, 349 residues long: 4-hydroxy-3-methylbut-2-en-1-yl diphosphate synthase (flavodoxin) (349 aa).

Positions 264, 267, 299, and 306 each coordinate [4Fe-4S] cluster.

The protein belongs to the IspG family. Requires [4Fe-4S] cluster as cofactor.

It catalyses the reaction (2E)-4-hydroxy-3-methylbut-2-enyl diphosphate + oxidized [flavodoxin] + H2O + 2 H(+) = 2-C-methyl-D-erythritol 2,4-cyclic diphosphate + reduced [flavodoxin]. It functions in the pathway isoprenoid biosynthesis; isopentenyl diphosphate biosynthesis via DXP pathway; isopentenyl diphosphate from 1-deoxy-D-xylulose 5-phosphate: step 5/6. Converts 2C-methyl-D-erythritol 2,4-cyclodiphosphate (ME-2,4cPP) into 1-hydroxy-2-methyl-2-(E)-butenyl 4-diphosphate. The chain is 4-hydroxy-3-methylbut-2-en-1-yl diphosphate synthase (flavodoxin) from Clostridium tetani (strain Massachusetts / E88).